An 86-amino-acid chain; its full sequence is Myosin light chain alkali (86 aa).

An EF-hand domain is found at 11–46 (GCYEDFIECLKLYDKEENGTMMLAELQHALLALGES).

As to quaternary structure, myosin is a hexamer of 2 heavy chains and 4 light chains.

In Drosophila subobscura (Fruit fly), this protein is Myosin light chain alkali (Mlc1).